Here is a 422-residue protein sequence, read N- to C-terminus: Probable cell wall mannoprotein PIR32 (422 aa).

The N-terminal stretch at 1 to 21 (MIHYLIFPILLIFFQIIKSSG) is a signal peptide. Disordered stretches follow at residues 116-143 (DGQV…EDCF) and 155-313 (DYQD…EGYE). Residues 133 to 143 (GDDDDDDEDCF) are compositionally biased toward acidic residues. Over residues 158 to 169 (DMNTQEQANEDS) the composition is skewed to polar residues. The stretch at 179–214 (HQQVVDQNQQINEEEEETQEQQMQEENNNTNEIEDN) forms a coiled coil. Composition is skewed to low complexity over residues 180-189 (QQVVDQNQQI) and 198-209 (EQQMQEENNNTN). Residue Asn-206 is glycosylated (N-linked (GlcNAc...) asparagine). The segment covering 220-231 (ETIEEIYDDIDN) has biased composition (acidic residues). N-linked (GlcNAc...) asparagine glycosylation is found at Asn-232 and Asn-237. The span at 238 to 248 (NSKKYHKKRPH) shows a compositional bias: basic residues. Basic and acidic residues-rich tracts occupy residues 249-284 (NNYE…DHKW) and 300-311 (QEQKPKHEKSEG). Asn-328 is a glycosylation site (N-linked (GlcNAc...) asparagine).

This sequence belongs to the PIR protein family. In terms of processing, O-glycosylated. Extensively O-mannosylated.

The protein resides in the secreted. Its subcellular location is the cell wall. In terms of biological role, probable structural component of the cell wall involved in cell wall integrity and virulence. In Candida albicans (strain SC5314 / ATCC MYA-2876) (Yeast), this protein is Probable cell wall mannoprotein PIR32 (PIR32).